An 800-amino-acid polypeptide reads, in one-letter code: Protein translocase subunit SecA (800 aa).

Residues Gln85, 103–107 (GEGKT), and Asp504 each bind ATP.

Belongs to the SecA family. In terms of assembly, monomer and homodimer. Part of the essential Sec protein translocation apparatus which comprises SecA, SecYEG and auxiliary proteins SecDF. Other proteins may also be involved.

It localises to the cell membrane. It is found in the cytoplasm. It catalyses the reaction ATP + H2O + cellular proteinSide 1 = ADP + phosphate + cellular proteinSide 2.. Its function is as follows. Part of the Sec protein translocase complex. Interacts with the SecYEG preprotein conducting channel. Has a central role in coupling the hydrolysis of ATP to the transfer of proteins into and across the cell membrane, serving as an ATP-driven molecular motor driving the stepwise translocation of polypeptide chains across the membrane. The protein is Protein translocase subunit SecA of Lactobacillus delbrueckii subsp. bulgaricus (strain ATCC 11842 / DSM 20081 / BCRC 10696 / JCM 1002 / NBRC 13953 / NCIMB 11778 / NCTC 12712 / WDCM 00102 / Lb 14).